The following is a 369-amino-acid chain: tRNA 2-selenouridine synthase (369 aa).

The 125-residue stretch at phenylalanine 12 to arginine 136 folds into the Rhodanese domain. The S-selanylcysteine intermediate role is filled by cysteine 95.

It belongs to the SelU family. As to quaternary structure, monomer.

The enzyme catalyses 5-methylaminomethyl-2-thiouridine(34) in tRNA + selenophosphate + (2E)-geranyl diphosphate + H2O + H(+) = 5-methylaminomethyl-2-selenouridine(34) in tRNA + (2E)-thiogeraniol + phosphate + diphosphate. The catalysed reaction is 5-methylaminomethyl-2-thiouridine(34) in tRNA + (2E)-geranyl diphosphate = 5-methylaminomethyl-S-(2E)-geranyl-thiouridine(34) in tRNA + diphosphate. It carries out the reaction 5-methylaminomethyl-S-(2E)-geranyl-thiouridine(34) in tRNA + selenophosphate + H(+) = 5-methylaminomethyl-2-(Se-phospho)selenouridine(34) in tRNA + (2E)-thiogeraniol. It catalyses the reaction 5-methylaminomethyl-2-(Se-phospho)selenouridine(34) in tRNA + H2O = 5-methylaminomethyl-2-selenouridine(34) in tRNA + phosphate. Its function is as follows. Involved in the post-transcriptional modification of the uridine at the wobble position (U34) of tRNA(Lys), tRNA(Glu) and tRNA(Gln). Catalyzes the conversion of 2-thiouridine (S2U-RNA) to 2-selenouridine (Se2U-RNA). Acts in a two-step process involving geranylation of 2-thiouridine (S2U) to S-geranyl-2-thiouridine (geS2U) and subsequent selenation of the latter derivative to 2-selenouridine (Se2U) in the tRNA chain. In Pseudomonas paraeruginosa (strain DSM 24068 / PA7) (Pseudomonas aeruginosa (strain PA7)), this protein is tRNA 2-selenouridine synthase.